Here is a 98-residue protein sequence, read N- to C-terminus: NADH-ubiquinone oxidoreductase chain 4L (98 aa).

3 helical membrane passes run 1 to 21 (MPIIYMNIMLSFIISLLGMLI), 29 to 49 (SLLCLEGMMLSLFIMSTLMAL), and 58 to 78 (IVPVALLVFAACEAAVGLALL).

The protein belongs to the complex I subunit 4L family. In terms of assembly, core subunit of respiratory chain NADH dehydrogenase (Complex I) which is composed of 45 different subunits.

The protein resides in the mitochondrion inner membrane. It catalyses the reaction a ubiquinone + NADH + 5 H(+)(in) = a ubiquinol + NAD(+) + 4 H(+)(out). Functionally, core subunit of the mitochondrial membrane respiratory chain NADH dehydrogenase (Complex I) which catalyzes electron transfer from NADH through the respiratory chain, using ubiquinone as an electron acceptor. Part of the enzyme membrane arm which is embedded in the lipid bilayer and involved in proton translocation. The protein is NADH-ubiquinone oxidoreductase chain 4L (MT-ND4L) of Semnopithecus entellus (Northern plains gray langur).